A 932-amino-acid polypeptide reads, in one-letter code: Protein translocase subunit SecA (932 aa).

ATP contacts are provided by residues Q86, 104 to 108 (GEGKT), and D494. The interval 857–932 (EDAGAEAHAS…KPAPKRKKRR (76 aa)) is disordered. Over residues 905 to 915 (TAGSAGDSNLP) the composition is skewed to polar residues. The span at 920 to 932 (KTNKPAPKRKKRR) shows a compositional bias: basic residues.

It belongs to the SecA family. As to quaternary structure, monomer and homodimer. Part of the essential Sec protein translocation apparatus which comprises SecA, SecYEG and auxiliary proteins SecDF. Other proteins may also be involved.

It localises to the cell membrane. The protein resides in the cytoplasm. It catalyses the reaction ATP + H2O + cellular proteinSide 1 = ADP + phosphate + cellular proteinSide 2.. In terms of biological role, part of the Sec protein translocase complex. Interacts with the SecYEG preprotein conducting channel. Has a central role in coupling the hydrolysis of ATP to the transfer of proteins into and across the cell membrane, serving as an ATP-driven molecular motor driving the stepwise translocation of polypeptide chains across the membrane. The polypeptide is Protein translocase subunit SecA (Renibacterium salmoninarum (strain ATCC 33209 / DSM 20767 / JCM 11484 / NBRC 15589 / NCIMB 2235)).